The following is a 412-amino-acid chain: L-cysteine:1D-myo-inositol 2-amino-2-deoxy-alpha-D-glucopyranoside ligase (412 aa).

C43 is a binding site for Zn(2+). L-cysteinyl-5'-AMP contacts are provided by residues 43 to 46, T58, and 81 to 83; these read CGIT and NVT. The 'HIGH' region motif lies at 45–55; that stretch reads ITPYDATHLGH. Residues 187–192 carry the 'ERGGDP' region motif; sequence ERGGDP. W227 is an L-cysteinyl-5'-AMP binding site. Position 231 (C231) interacts with Zn(2+). An L-cysteinyl-5'-AMP-binding site is contributed by 249-251; it reads GSD. H256 is a Zn(2+) binding site. I283 is an L-cysteinyl-5'-AMP binding site. A 'KMSKS' region motif is present at residues 289-293; sequence KMSKS.

Belongs to the class-I aminoacyl-tRNA synthetase family. MshC subfamily. Monomer. The cofactor is Zn(2+).

The catalysed reaction is 1D-myo-inositol 2-amino-2-deoxy-alpha-D-glucopyranoside + L-cysteine + ATP = 1D-myo-inositol 2-(L-cysteinylamino)-2-deoxy-alpha-D-glucopyranoside + AMP + diphosphate + H(+). In terms of biological role, catalyzes the ATP-dependent condensation of GlcN-Ins and L-cysteine to form L-Cys-GlcN-Ins. The polypeptide is L-cysteine:1D-myo-inositol 2-amino-2-deoxy-alpha-D-glucopyranoside ligase (mshC) (Mycolicibacterium smegmatis (strain ATCC 700084 / mc(2)155) (Mycobacterium smegmatis)).